A 487-amino-acid chain; its full sequence is MNKEIFNSKLFEKLDKDNLIENSREWSNEIDSTWNYNDVVGILKSWESLNTISLEYIDSIVNCLTETGKDILINGSPEAKLYNILTEQGMSPADANKQFGATAFGSAKNKGWIEVKAGKIFKKVESINDIVKSDLSIPDLSKLDSKTLEQYKKSRFIEEKKLSYYRVTKGEQYNKRSKELSDLTIEMLKDDSWEKESFKVNINAMGVVPEQGYRHPLNKVKNEFKQIFLDMGFEEMPTFNFVENGFWNFDALFQPQQHPARELQDTFFIKDPKTSHDFSDEYCERVKQVHSVGGYGSLGWIYDWKLEEAEKNILRTHTTAVSARMLYKLAQNGFKPKKYFSIDRVFRNETLDATHLAEFHQVEGVIADVDISLGHLIGVISEFFKRLGIDNVRFKPAFNPYTEPSMEIFGYHPILKRWVELGNSGIFRPELLLPMGIPENVRVAAWGLSLERPTMIKYGLDNIRAIFGNSINVNFIKNNPICMFESK.

L-phenylalanine is bound by residues Thr-319, 361–363, and Tyr-401; that span reads QVE. Glu-403 contributes to the Mg(2+) binding site. Position 427 (Phe-427) interacts with L-phenylalanine.

The protein belongs to the class-II aminoacyl-tRNA synthetase family. Phe-tRNA synthetase alpha subunit type 2 subfamily. As to quaternary structure, tetramer of two alpha and two beta subunits. The cofactor is Mg(2+).

The protein localises to the cytoplasm. It catalyses the reaction tRNA(Phe) + L-phenylalanine + ATP = L-phenylalanyl-tRNA(Phe) + AMP + diphosphate + H(+). The sequence is that of Phenylalanine--tRNA ligase alpha subunit (phesA) from Dictyostelium discoideum (Social amoeba).